The chain runs to 423 residues: tRNA(Ile)-lysidine synthase (423 aa).

29 to 34 (SGGKDS) serves as a coordination point for ATP.

The protein belongs to the tRNA(Ile)-lysidine synthase family.

It localises to the cytoplasm. The enzyme catalyses cytidine(34) in tRNA(Ile2) + L-lysine + ATP = lysidine(34) in tRNA(Ile2) + AMP + diphosphate + H(+). Its function is as follows. Ligates lysine onto the cytidine present at position 34 of the AUA codon-specific tRNA(Ile) that contains the anticodon CAU, in an ATP-dependent manner. Cytidine is converted to lysidine, thus changing the amino acid specificity of the tRNA from methionine to isoleucine. The chain is tRNA(Ile)-lysidine synthase from Lactococcus lactis subsp. lactis (strain IL1403) (Streptococcus lactis).